The primary structure comprises 394 residues: Elongation factor Tu (394 aa).

The 195-residue stretch at 10–204 (KPHINIGTIG…AVDDNIPTPE (195 aa)) folds into the tr-type G domain. The interval 19 to 26 (GHVDHGKT) is G1. 19–26 (GHVDHGKT) provides a ligand contact to GTP. Mg(2+) is bound at residue threonine 26. Residues 60–64 (GITIN) are G2. The tract at residues 81 to 84 (DCPG) is G3. GTP is bound by residues 81-85 (DCPGH) and 136-139 (NKID). Positions 136 to 139 (NKID) are G4. The tract at residues 174–176 (SAL) is G5.

Belongs to the TRAFAC class translation factor GTPase superfamily. Classic translation factor GTPase family. EF-Tu/EF-1A subfamily. As to quaternary structure, monomer.

The protein resides in the cytoplasm. The enzyme catalyses GTP + H2O = GDP + phosphate + H(+). Functionally, GTP hydrolase that promotes the GTP-dependent binding of aminoacyl-tRNA to the A-site of ribosomes during protein biosynthesis. The protein is Elongation factor Tu of Chlamydia felis (strain Fe/C-56) (Chlamydophila felis).